The sequence spans 981 residues: DNA ligase 4 (981 aa).

Residues Glu320, Lys322, Arg327, Glu380, Phe424, Glu484, Lys489, Lys506, and Lys508 each coordinate ATP. Lys322 acts as the N6-AMP-lysine intermediate in catalysis. Glu380 serves as a coordination point for Mg(2+). Position 484 (Glu484) interacts with Mg(2+). A disordered region spans residues 544–563 (SEKNNPSSYESGSDSDSDSE). BRCT domains lie at 721 to 819 (SKAD…PKYV) and 875 to 980 (ERLL…EYAA).

It belongs to the ATP-dependent DNA ligase family. Mg(2+) is required as a cofactor.

Its subcellular location is the nucleus. It catalyses the reaction ATP + (deoxyribonucleotide)n-3'-hydroxyl + 5'-phospho-(deoxyribonucleotide)m = (deoxyribonucleotide)n+m + AMP + diphosphate.. DNA ligase involved in DNA non-homologous end joining (NHEJ); required for double-strand break (DSB) repair. In Eremothecium gossypii (strain ATCC 10895 / CBS 109.51 / FGSC 9923 / NRRL Y-1056) (Yeast), this protein is DNA ligase 4 (LIG4).